We begin with the raw amino-acid sequence, 360 residues long: DNA replication and repair protein RecF (360 aa).

30 to 37 contributes to the ATP binding site; it reads GVNGAGKT.

This sequence belongs to the RecF family.

It localises to the cytoplasm. The RecF protein is involved in DNA metabolism; it is required for DNA replication and normal SOS inducibility. RecF binds preferentially to single-stranded, linear DNA. It also seems to bind ATP. This is DNA replication and repair protein RecF from Thioalkalivibrio sulfidiphilus (strain HL-EbGR7).